A 518-amino-acid chain; its full sequence is Trigger factor (518 aa).

Residues 170 to 255 (GDVVVIDFVG…VKGLESPQEA (86 aa)) form the PPIase FKBP-type domain. Residues 447–518 (EAPAKPAKKA…AKKAAAKKDA (72 aa)) form a disordered region. Composition is skewed to basic residues over residues 452-468 (PAKK…KKAA) and 501-518 (PAAK…KKDA).

It belongs to the FKBP-type PPIase family. Tig subfamily.

The protein localises to the cytoplasm. It catalyses the reaction [protein]-peptidylproline (omega=180) = [protein]-peptidylproline (omega=0). In terms of biological role, involved in protein export. Acts as a chaperone by maintaining the newly synthesized protein in an open conformation. Functions as a peptidyl-prolyl cis-trans isomerase. The protein is Trigger factor of Maricaulis maris (strain MCS10) (Caulobacter maris).